The following is a 115-amino-acid chain: Toxin-like structure LSTX-R1 (115 aa).

Residues 1–18 form the signal peptide; sequence MKLSLIIIATSLVIAVVA. Positions 19–51 are excised as a propeptide; sequence FPSKDSAATDFDKTESLENVEERVETALDERPR.

Belongs to the neurotoxin 25 family. F7 subfamily. In terms of processing, contains 4 disulfide bonds. Expressed by the venom gland.

The protein localises to the secreted. In Lycosa singoriensis (Wolf spider), this protein is Toxin-like structure LSTX-R1.